Reading from the N-terminus, the 296-residue chain is tRNA dimethylallyltransferase (296 aa).

2 to 9 (GPTASGKT) is a binding site for ATP. A substrate-binding site is contributed by 4–9 (TASGKT). Interaction with substrate tRNA regions lie at residues 27-30 (DSAL), 151-155 (QRLSR), and 232-237 (RCVGYR).

Belongs to the IPP transferase family. In terms of assembly, monomer. The cofactor is Mg(2+).

It carries out the reaction adenosine(37) in tRNA + dimethylallyl diphosphate = N(6)-dimethylallyladenosine(37) in tRNA + diphosphate. Functionally, catalyzes the transfer of a dimethylallyl group onto the adenine at position 37 in tRNAs that read codons beginning with uridine, leading to the formation of N6-(dimethylallyl)adenosine (i(6)A). The chain is tRNA dimethylallyltransferase from Shewanella sp. (strain ANA-3).